A 584-amino-acid polypeptide reads, in one-letter code: Acetylcholinesterase (584 aa).

Residue alanine 1 is a signal peptide. Cysteine 70 and cysteine 97 form a disulfide bridge. Serine 204 (acyl-ester intermediate) is an active-site residue. Cysteine 258 and cysteine 273 are oxidised to a cystine. Residue asparagine 266 is glycosylated (N-linked (GlcNAc...) asparagine). The active-site Charge relay system is glutamate 335. The N-linked (GlcNAc...) asparagine glycan is linked to asparagine 351. The cysteines at positions 410 and 530 are disulfide-linked. Catalysis depends on histidine 448, which acts as the Charge relay system. Residue asparagine 465 is glycosylated (N-linked (GlcNAc...) asparagine).

This sequence belongs to the type-B carboxylesterase/lipase family. Homotetramer; composed of disulfide-linked homodimers. Interacts with PRIMA1. The interaction with PRIMA1 is required to anchor it to the basal lamina of cells and organize into tetramers.

The protein resides in the synapse. The protein localises to the secreted. Its subcellular location is the cell membrane. It catalyses the reaction acetylcholine + H2O = choline + acetate + H(+). Functionally, terminates signal transduction at the neuromuscular junction by rapid hydrolysis of the acetylcholine released into the synaptic cleft. The sequence is that of Acetylcholinesterase (ACHE) from Oryctolagus cuniculus (Rabbit).